The primary structure comprises 332 residues: Anthranilate phosphoribosyltransferase (332 aa).

5-phospho-alpha-D-ribose 1-diphosphate is bound by residues G79, 82 to 83 (GD), T87, 89 to 92 (NIST), 107 to 115 (KHGNRSVSS), and S119. G79 is an anthranilate binding site. S91 serves as a coordination point for Mg(2+). Position 110 (N110) interacts with anthranilate. Position 165 (R165) interacts with anthranilate. Mg(2+) is bound by residues D223 and E224.

The protein belongs to the anthranilate phosphoribosyltransferase family. Homodimer. The cofactor is Mg(2+).

The enzyme catalyses N-(5-phospho-beta-D-ribosyl)anthranilate + diphosphate = 5-phospho-alpha-D-ribose 1-diphosphate + anthranilate. Its pathway is amino-acid biosynthesis; L-tryptophan biosynthesis; L-tryptophan from chorismate: step 2/5. In terms of biological role, catalyzes the transfer of the phosphoribosyl group of 5-phosphorylribose-1-pyrophosphate (PRPP) to anthranilate to yield N-(5'-phosphoribosyl)-anthranilate (PRA). In Vibrio vulnificus (strain CMCP6), this protein is Anthranilate phosphoribosyltransferase.